Consider the following 569-residue polypeptide: MTAPSGSTPDVDVVVVGAGPSGLTLANILGLQGVATLVVDERDTLIDYPRGVGLDDESLRTFQAIGLVERVLPHTVPNQILRFFDADRRLLAEMAPPDARFGWPKRNGFVQPLVDAELFGGLERFDHVEVRFDHRMQSCSETAGGVTVTFDGDRDPVRARYVVGCDGGRSTTRRQMGVSFDGTTSSTRWLVVDVANDPLGHPNSEVGADPARPYVSISIAHGIRRFEFMIHPDETDEQADDPAFVRRMLGQRVPYPERVDIIRHRVYTHHSRIAGSFRKGRLMLAGDAAHLMPVWQGQGYNSGIRDAANLGWKLAAVVNGQADDALLDTYDLERRKHARAMIDLSTMVGKVISPTNRGLAALRDRVIHAASVVPTLKRYILEMRFKPMPRYQQGAVYHDAQPSPTSPTGTLFIQPRVDTREEFNVLLDDVLGPGFAVVCWSNNLRAVLGDEAFDRWKGLGARFVEARPMTQLHWPGYDDADVEVVGDRTGALKKWFDVSTDSVLFVRPDRCIAGACIAQRAPEVSTALFAVLHLTREGGAGSHGEKSDGTVLHVAQSAAEPSGTSAGTP.

Residues 12 to 41 and 277 to 287 each bind FAD; these read DVVV…VVDE and FRKGRLMLAGD.

It belongs to the PheA/TfdB FAD monooxygenase family. Requires FAD as cofactor.

It catalyses the reaction 3-(3-hydroxyphenyl)propanoate + NADH + O2 + H(+) = 3-(2,3-dihydroxyphenyl)propanoate + NAD(+) + H2O. The enzyme catalyses (2E)-3-(3-hydroxyphenyl)prop-2-enoate + NADH + O2 + H(+) = (2E)-3-(2,3-dihydroxyphenyl)prop-2-enoate + NAD(+) + H2O. It functions in the pathway aromatic compound metabolism; 3-phenylpropanoate degradation. Functionally, catalyzes the insertion of one atom of molecular oxygen into position 2 of the phenyl ring of 3-(3-hydroxyphenyl)propionate (3-HPP) and hydroxycinnamic acid (3HCI). The protein is 3-(3-hydroxy-phenyl)propionate/3-hydroxycinnamic acid hydroxylase of Mycolicibacterium vanbaalenii (strain DSM 7251 / JCM 13017 / BCRC 16820 / KCTC 9966 / NRRL B-24157 / PYR-1) (Mycobacterium vanbaalenii).